The sequence spans 363 residues: Disease resistance protein RBA1 (363 aa).

A TIR domain is found at 12 to 175 (PVPKVFLSFR…EIVKEVERVL (164 aa)). Residues 21–26 (RGEEIR) and Gly53 contribute to the NAD(+) site. Glu86 is an active-site residue.

As to quaternary structure, homooligomer; homooligomerization is required for activity.

The protein localises to the cytoplasm. The protein resides in the nucleus. Its subcellular location is the nucleoplasm. The catalysed reaction is NAD(+) + H2O = ADP-D-ribose + nicotinamide + H(+). The enzyme catalyses NADP(+) + H2O = ADP-D-ribose 2'-phosphate + nicotinamide + H(+). In terms of biological role, disease resistance (R) protein that specifically recognizes the HopBA1 type III effector protein from P.syringae, and triggers cell death. Acts as a NAD(+) hydrolase (NADase): in response to pathogen-recognition, catalyzes cleavage of NAD(+) into ADP-D-ribose (ADPR) and nicotinamide; NAD(+) cleavage triggering a defense system that promotes cell death. In addition to ADPR, also generates a cyclization variant of cyclic ADPR (cADPR), termed v-cADPR, for which the cyclizing bond is unknown. Also able to hydrolyze NADP(+), but not other NAD(+)-related molecules. The polypeptide is Disease resistance protein RBA1 (Arabidopsis thaliana (Mouse-ear cress)).